Reading from the N-terminus, the 213-residue chain is uncharacterized protein (213 aa).

This is an uncharacterized protein from Magallana gigas (Pacific oyster).